Here is a 185-residue protein sequence, read N- to C-terminus: Ribosome-recycling factor (185 aa).

The protein belongs to the RRF family.

Its subcellular location is the cytoplasm. Its function is as follows. Responsible for the release of ribosomes from messenger RNA at the termination of protein biosynthesis. May increase the efficiency of translation by recycling ribosomes from one round of translation to another. This is Ribosome-recycling factor from Alteromonas mediterranea (strain DSM 17117 / CIP 110805 / LMG 28347 / Deep ecotype).